The sequence spans 64 residues: DNA gyrase inhibitor YacG (64 aa).

Zn(2+) contacts are provided by Cys7, Cys10, Cys26, and Cys30. The tract at residues 44 to 64 (SIPGEPVVIANDDYNNEESDY) is disordered.

It belongs to the DNA gyrase inhibitor YacG family. Interacts with GyrB. The cofactor is Zn(2+).

Inhibits all the catalytic activities of DNA gyrase by preventing its interaction with DNA. Acts by binding directly to the C-terminal domain of GyrB, which probably disrupts DNA binding by the gyrase. This is DNA gyrase inhibitor YacG from Idiomarina loihiensis (strain ATCC BAA-735 / DSM 15497 / L2-TR).